A 1172-amino-acid chain; its full sequence is Thrombospondin-2 (1172 aa).

Positions 1–18 (MLWALALLALGIGPRASA) are cleaved as a signal peptide. The region spanning 19–215 (GDHVKDTSFD…LQNVHLVFAD (197 aa)) is the Laminin G-like domain. The tract at residues 19 to 232 (GDHVKDTSFD…KKGCQHSQGA (214 aa)) is heparin-binding. Residues asparagine 151, asparagine 316, and asparagine 330 are each glycosylated (N-linked (GlcNAc...) asparagine). The VWFC domain maps to 318–375 (SACVQEGRIFAENETWVVDSCTTCTCKKFKTVCHQITCSPATCANPSFVEGECCPSCS). 3 consecutive TSP type-1 domains span residues 381–431 (DEGW…GKCD), 437–492 (NGGW…DPCP), and 494–549 (DGRW…RSCP). Cystine bridges form between cysteine 393/cysteine 425, cysteine 397/cysteine 430, cysteine 408/cysteine 415, cysteine 449/cysteine 486, cysteine 453/cysteine 491, cysteine 464/cysteine 476, cysteine 506/cysteine 543, cysteine 510/cysteine 548, cysteine 521/cysteine 533, cysteine 553/cysteine 564, cysteine 558/cysteine 574, cysteine 577/cysteine 588, cysteine 594/cysteine 610, cysteine 601/cysteine 619, cysteine 622/cysteine 646, cysteine 652/cysteine 665, cysteine 659/cysteine 678, cysteine 680/cysteine 691, cysteine 707/cysteine 715, cysteine 720/cysteine 740, cysteine 756/cysteine 776, cysteine 779/cysteine 799, cysteine 815/cysteine 835, cysteine 838/cysteine 858, cysteine 876/cysteine 896, cysteine 912/cysteine 932, and cysteine 948/cysteine 1169. An N-linked (GlcNAc...) asparagine glycan is attached at asparagine 457. The 41-residue stretch at 549–589 (PIDGCLSNPCFPGAKCNSFPDGSWSCGSCPVGFLGNGTHCE) folds into the EGF-like 1 domain. N-linked (GlcNAc...) asparagine glycosylation occurs at asparagine 584. In terms of domain architecture, EGF-like 2 spans 648 to 692 (PENPCKDKTHSCHKNAECIYLGHFSDPMYKCECQIGYAGDGLICG). TSP type-3 repeat units follow at residues 693–728 (EDSDLDGWPNNNLVCATNATYHCIKDNCPKLPNSGQ), 729–764 (EDFDKDGIGDACDEDDDNDGVSDEKDNCQLLFNPRQ), 765–787 (LDYDKDEVGDRCDNCPYVHNPAQ), 788–823 (IDTDNNGEGDACSVDIDGDDVFNERDNCPYVYNTDQ), 824–846 (RDTDGDGVGDHCDNCPLMHNPDQ), 847–884 (IDQDNDLVGDQCDNNEDIDDDGHQNNQDNCPYISNSNQ), 885–920 (ADHDNDGKGDACDSDDDNDGVPDDRDNCRLVFNPDQ), and 921–956 (EDSDGDGRGDICKDDFDNDNVPDIDDVCPENNAITE). The N-linked (GlcNAc...) asparagine glycan is linked to asparagine 710. Positions 727 to 752 (GQEDFDKDGIGDACDEDDDNDGVSDE) are disordered. Over residues 739-749 (ACDEDDDNDGV) the composition is skewed to acidic residues. Positions 846–938 (QIDQDNDLVG…GDICKDDFDN (93 aa)) are disordered. Residues 847-866 (IDQDNDLVGDQCDNNEDIDD) show a composition bias toward acidic residues. The segment covering 870-884 (QNNQDNCPYISNSNQ) has biased composition (polar residues). Residues 885–895 (ADHDNDGKGDA) are compositionally biased toward basic and acidic residues. A compositionally biased stretch (acidic residues) spans 896 to 905 (CDSDDDNDGV). A compositionally biased stretch (basic and acidic residues) spans 925–935 (GDGRGDICKDD). The Cell attachment site motif lies at 928–930 (RGD). Residues 960–1172 (RNFQMVPLDP…SDLKYECRDA (213 aa)) form the TSP C-terminal domain. Asparagine 1069 carries N-linked (GlcNAc...) asparagine glycosylation.

This sequence belongs to the thrombospondin family. In terms of assembly, homotrimer; disulfide-linked. Can bind to fibrinogen, fibronectin, laminin and type V collagen. Interacts (via the TSP type I repeats) with CD36; the interaction conveys an antiangiogenic effect. Interacts (via the TSP type I repeats) with HRG; the interaction blocks the antiangiogenic effect of THBS2 with CD36. Can bind to fibrinogen, fibronectin, laminin.

Its function is as follows. Adhesive glycoprotein that mediates cell-to-cell and cell-to-matrix interactions. Ligand for CD36 mediating antiangiogenic properties. The protein is Thrombospondin-2 (Thbs2) of Mus musculus (Mouse).